A 388-amino-acid polypeptide reads, in one-letter code: MSAATTADIDHYRTVLAGAFDDQVLEWTREAEARQRFPRELIEHLGARGVFSEKWCGGMLPDVGKLVELARALGRLSSAGIGVGVSLHDSAIAVLRRFGKSDYLRDICERAIAGQAVLCIGASEESGGSDLQIVRTEMSSRDGGFDIRGVKKFVSLSPIADHIMVVARSIDHDSASKHGNVALIAVPTSQASVQRPYAKVGAGPLDTAAVHIDTWVPADALVARAGTGLAAISWGLAHERMSIAGQIAASCQRAIGITLARMMTRRQFGRTLFEHQALRLRMADLQARVDLLQHGLNGIAAQGRLDLRAAAGVKVTAARLGEEVMSECMHIFGGAGYLVEETPLGRWWRDMKLARVGGGTDEVLWELVAAGMAADHGGYRSVVGASSA.

This sequence belongs to the acyl-CoA dehydrogenase family. It depends on FAD as a cofactor.

The protein operates within siderophore biosynthesis; mycobactin biosynthesis. Functionally, catalyzes the dehydrogenation at the alpha-beta position of ACP-bound acyl chains. This results in the introduction of a double bond in the lipidic chain, which is further transferred to the epsilon-amino group of lysine residue in the mycobactin core by MbtK. This is Acyl-[acyl-carrier-protein] dehydrogenase MbtN (mbtN) from Mycolicibacterium paratuberculosis (strain ATCC BAA-968 / K-10) (Mycobacterium paratuberculosis).